We begin with the raw amino-acid sequence, 1104 residues long: Transposon Ty4-P Gag-Pol polyprotein (1104 aa).

Positions 48 to 112 (VKQYQRNLNR…VEKIQLLETN (65 aa)) form a coiled coil. Residues 381–501 (QQQLKSSAKE…KTKMVLSRKY (121 aa)) are ty4 protease. The For protease activity; shared with dimeric partner role is filled by D414. The interval 539–599 (AIKPTSSPGF…EPNEFWCQTC (61 aa)) is integrase-type zinc finger-like. Positions 619 to 786 (TDHEPGSSWC…LPLKAISRQP (168 aa)) constitute an Integrase catalytic domain. Residues D630 and D695 each coordinate Mg(2+).

The protease is a homodimer, whose active site consists of two apposed aspartic acid residues. In terms of processing, proteolytically processed into capsid protein (CA), Ty4 protease (PR), integrase (IN) and reverse transcriptase/ribonuclease H (RT) proteins. Initially, virus-like particles (VLPs) are composed of the structural unprocessed proteins Gag and Gag-Pol, and also contain the host initiator methionine tRNA (tRNA(i)-Met) which serves as a primer for minus-strand DNA synthesis, and a dimer of genomic Ty RNA. Processing of the polyproteins occurs within the particle and proceeds by an ordered pathway, called maturation. First, the protease (PR) is released by autocatalytic cleavage of the Gag-Pol polyprotein, and this cleavage is a prerequisite for subsequent processing at the remaining sites to release the mature structural and catalytic proteins. Maturation takes place prior to the RT reaction and is required to produce transposition-competent VLPs.

The protein localises to the cytoplasm. The protein resides in the nucleus. The enzyme catalyses DNA(n) + a 2'-deoxyribonucleoside 5'-triphosphate = DNA(n+1) + diphosphate. The catalysed reaction is Endonucleolytic cleavage to 5'-phosphomonoester.. Capsid protein (CA) is the structural component of the virus-like particle (VLP), forming the shell that encapsulates the retrotransposons dimeric RNA genome. Its function is as follows. The aspartyl protease (PR) mediates the proteolytic cleavages of the Gag and Gag-Pol polyproteins after assembly of the VLP. In terms of biological role, reverse transcriptase/ribonuclease H (RT) is a multifunctional enzyme that catalyzes the conversion of the retro-elements RNA genome into dsDNA within the VLP. The enzyme displays a DNA polymerase activity that can copy either DNA or RNA templates, and a ribonuclease H (RNase H) activity that cleaves the RNA strand of RNA-DNA heteroduplexes during plus-strand synthesis and hydrolyzes RNA primers. The conversion leads to a linear dsDNA copy of the retrotransposon that includes long terminal repeats (LTRs) at both ends. Functionally, integrase (IN) targets the VLP to the nucleus, where a subparticle preintegration complex (PIC) containing at least integrase and the newly synthesized dsDNA copy of the retrotransposon must transit the nuclear membrane. Once in the nucleus, integrase performs the integration of the dsDNA into the host genome. The polypeptide is Transposon Ty4-P Gag-Pol polyprotein (TY4B-P) (Saccharomyces cerevisiae (strain ATCC 204508 / S288c) (Baker's yeast)).